Consider the following 428-residue polypeptide: Enolase (428 aa).

Gln163 contributes to the (2R)-2-phosphoglycerate binding site. Glu205 acts as the Proton donor in catalysis. Residues Asp242, Glu285, and Asp312 each coordinate Mg(2+). Positions 337, 366, 367, and 388 each coordinate (2R)-2-phosphoglycerate. Lys337 functions as the Proton acceptor in the catalytic mechanism.

The protein belongs to the enolase family. Mg(2+) serves as cofactor.

Its subcellular location is the cytoplasm. The protein resides in the secreted. It is found in the cell surface. It catalyses the reaction (2R)-2-phosphoglycerate = phosphoenolpyruvate + H2O. It functions in the pathway carbohydrate degradation; glycolysis; pyruvate from D-glyceraldehyde 3-phosphate: step 4/5. Its function is as follows. Catalyzes the reversible conversion of 2-phosphoglycerate (2-PG) into phosphoenolpyruvate (PEP). It is essential for the degradation of carbohydrates via glycolysis. The polypeptide is Enolase (Neisseria meningitidis serogroup C (strain 053442)).